A 221-amino-acid polypeptide reads, in one-letter code: GDP-perosamine N-acetyltransferase (221 aa).

Catalysis depends on histidine 139, which acts as the Proton acceptor.

It belongs to the transferase hexapeptide repeat family. As to quaternary structure, homotrimer.

The catalysed reaction is GDP-alpha-D-perosamine + acetyl-CoA = GDP-N-acetyl-alpha-D-perosamine + CoA + H(+). Its pathway is bacterial outer membrane biogenesis; LPS O-antigen biosynthesis. Functionally, catalyzes the transfer of an acetyl residue from acetyl-CoA onto GDP-perosamine to form GDP-N-acetyl-perosamine. This Escherichia coli O157:H7 protein is GDP-perosamine N-acetyltransferase.